Reading from the N-terminus, the 153-residue chain is Probable Brix domain-containing ribosomal biogenesis protein (153 aa).

In terms of domain architecture, Brix spans 1 to 153 (MQVLTTSRKP…RILKISRSSR (153 aa)).

In terms of biological role, probably involved in the biogenesis of the ribosome. In Archaeoglobus fulgidus (strain ATCC 49558 / DSM 4304 / JCM 9628 / NBRC 100126 / VC-16), this protein is Probable Brix domain-containing ribosomal biogenesis protein.